The following is a 736-amino-acid chain: Catalase-1 (736 aa).

The interval methionine 1–lysine 29 is disordered. Arginine 89 lines the heme pocket. Histidine 92 is an active-site residue. Arginine 129 contributes to the heme binding site. Asparagine 165 is a catalytic residue. Heme contacts are provided by phenylalanine 178, arginine 375, tyrosine 379, and arginine 386. The 3-(S-cysteinyl)-tyrosine (Cys-Tyr) cross-link spans cysteine 356–tyrosine 379.

This sequence belongs to the catalase family. As to quaternary structure, homotetramer. Heme is required as a cofactor. Glycosylated; with alpha-glucose and/or alpha-mannose.

The protein localises to the secreted. The protein resides in the cell wall. The enzyme catalyses 2 H2O2 = O2 + 2 H2O. Its function is as follows. Occurs in almost all aerobically respiring organisms and serves to protect cells from the toxic effects of hydrogen peroxide. The polypeptide is Catalase-1 (cat-1) (Neurospora crassa (strain ATCC 24698 / 74-OR23-1A / CBS 708.71 / DSM 1257 / FGSC 987)).